Reading from the N-terminus, the 183-residue chain is Protein Syd (183 aa).

This sequence belongs to the Syd family.

It localises to the cell inner membrane. In terms of biological role, interacts with the SecY protein in vivo. May bind preferentially to an uncomplexed state of SecY, thus functioning either as a chelating agent for excess SecY in the cell or as a regulatory factor that negatively controls the translocase function. This chain is Protein Syd, found in Aliivibrio fischeri (strain ATCC 700601 / ES114) (Vibrio fischeri).